The sequence spans 292 residues: ATP synthase gamma chain (292 aa).

It belongs to the ATPase gamma chain family. As to quaternary structure, F-type ATPases have 2 components, CF(1) - the catalytic core - and CF(0) - the membrane proton channel. CF(1) has five subunits: alpha(3), beta(3), gamma(1), delta(1), epsilon(1). CF(0) has three main subunits: a, b and c.

It is found in the cell inner membrane. Functionally, produces ATP from ADP in the presence of a proton gradient across the membrane. The gamma chain is believed to be important in regulating ATPase activity and the flow of protons through the CF(0) complex. This chain is ATP synthase gamma chain, found in Hyphomonas neptunium (strain ATCC 15444).